Consider the following 180-residue polypeptide: Ribulose bisphosphate carboxylase small subunit, chloroplastic 4 (180 aa).

The N-terminal 56 residues, 1-56 (MASSIVSSAAVATRANGAQASMVGPFTGLKSTASFPVSRKQNLDITSIASNGGRVR), are a transit peptide targeting the chloroplast.

It belongs to the RuBisCO small chain family. As to quaternary structure, heterohexadecamer of 8 large and 8 small subunits.

The protein resides in the plastid. The protein localises to the chloroplast. In terms of biological role, ruBisCO catalyzes two reactions: the carboxylation of D-ribulose 1,5-bisphosphate, the primary event in carbon dioxide fixation, as well as the oxidative fragmentation of the pentose substrate. Both reactions occur simultaneously and in competition at the same active site. Although the small subunit is not catalytic it is essential for maximal activity. This Solanum tuberosum (Potato) protein is Ribulose bisphosphate carboxylase small subunit, chloroplastic 4.